A 406-amino-acid polypeptide reads, in one-letter code: Tryptophan 2,3-dioxygenase (406 aa).

Residues 72 to 76 (FIITH) and Arg-144 each bind substrate. Residue His-328 coordinates heme. Thr-342 contacts substrate.

It belongs to the tryptophan 2,3-dioxygenase family. As to quaternary structure, homotetramer. Dimer of dimers. It depends on heme as a cofactor.

It carries out the reaction L-tryptophan + O2 = N-formyl-L-kynurenine. It participates in amino-acid degradation; L-tryptophan degradation via kynurenine pathway; L-kynurenine from L-tryptophan: step 1/2. Heme-dependent dioxygenase that catalyzes the oxidative cleavage of the L-tryptophan (L-Trp) pyrrole ring and converts L-tryptophan to N-formyl-L-kynurenine. Catalyzes the oxidative cleavage of the indole moiety. This is Tryptophan 2,3-dioxygenase from Homo sapiens (Human).